The following is a 245-amino-acid chain: Thioredoxin-like 1-2, chloroplastic (245 aa).

A chloroplast-targeting transit peptide spans methionine 1–serine 92. The Thioredoxin domain occupies alanine 93 to serine 194. Catalysis depends on nucleophile residues cysteine 117 and cysteine 120. Cysteine 117 and cysteine 120 are oxidised to a cystine.

The protein belongs to the thioredoxin family.

The protein localises to the plastid. It is found in the chloroplast. In terms of biological role, probable thiol-disulfide oxidoreductase that may participate in various redox reactions. This Arabidopsis thaliana (Mouse-ear cress) protein is Thioredoxin-like 1-2, chloroplastic.